A 653-amino-acid polypeptide reads, in one-letter code: ATP-dependent zinc metalloprotease FtsH 1 (653 aa).

At 1 to 8 (MAENKWLR) the chain is on the cytoplasmic side. A helical membrane pass occupies residues 9–29 (NGFVWIVLIIAVVALWVTFMK). Over 30-110 (DGGSAREENF…RVNPASQWGN (81 aa)) the chain is Extracellular. The chain crosses the membrane as a helical span at residues 111–131 (WLSALTFILPTLFLIGIVIFM). The Cytoplasmic segment spans residues 132–653 (MRQAQGTNNQ…SPTMRPQPAS (522 aa)). 203–210 (GPPGTGKT) is a binding site for ATP. Residue histidine 425 participates in Zn(2+) binding. The active site involves glutamate 426. 2 residues coordinate Zn(2+): histidine 429 and aspartate 501. Residues 604-653 (EPRPRPQLVGPPVTRPAALAHKTEEADRGGERSPHPQPHPSPTMRPQPAS) are disordered. A compositionally biased stretch (basic and acidic residues) spans 624–637 (HKTEEADRGGERSP). Residues 638–653 (HPQPHPSPTMRPQPAS) show a composition bias toward pro residues.

In the central section; belongs to the AAA ATPase family. It in the C-terminal section; belongs to the peptidase M41 family. As to quaternary structure, homohexamer. Requires Zn(2+) as cofactor.

The protein localises to the cell membrane. Functionally, acts as a processive, ATP-dependent zinc metallopeptidase for both cytoplasmic and membrane proteins. Plays a role in the quality control of integral membrane proteins. The sequence is that of ATP-dependent zinc metalloprotease FtsH 1 from Sphaerobacter thermophilus (strain ATCC 49802 / DSM 20745 / KCCM 41009 / NCIMB 13125 / S 6022).